We begin with the raw amino-acid sequence, 1413 residues long: DNA-directed RNA polymerase subunit beta' (1413 aa).

Zn(2+) is bound by residues Cys70, Cys72, Cys85, and Cys88. Mg(2+) contacts are provided by Asp460, Asp462, and Asp464. Cys819, Cys893, Cys900, and Cys903 together coordinate Zn(2+).

Belongs to the RNA polymerase beta' chain family. As to quaternary structure, the RNAP catalytic core consists of 2 alpha, 1 beta, 1 beta' and 1 omega subunit. When a sigma factor is associated with the core the holoenzyme is formed, which can initiate transcription. Mg(2+) is required as a cofactor. It depends on Zn(2+) as a cofactor.

The catalysed reaction is RNA(n) + a ribonucleoside 5'-triphosphate = RNA(n+1) + diphosphate. In terms of biological role, DNA-dependent RNA polymerase catalyzes the transcription of DNA into RNA using the four ribonucleoside triphosphates as substrates. This Burkholderia multivorans (strain ATCC 17616 / 249) protein is DNA-directed RNA polymerase subunit beta'.